The following is a 187-amino-acid chain: Peptide deformylase (187 aa).

Fe cation contacts are provided by Cys-94 and His-136. Glu-137 is an active-site residue. Fe cation is bound at residue His-140.

It belongs to the polypeptide deformylase family. Requires Fe(2+) as cofactor.

It catalyses the reaction N-terminal N-formyl-L-methionyl-[peptide] + H2O = N-terminal L-methionyl-[peptide] + formate. Functionally, removes the formyl group from the N-terminal Met of newly synthesized proteins. Requires at least a dipeptide for an efficient rate of reaction. N-terminal L-methionine is a prerequisite for activity but the enzyme has broad specificity at other positions. The sequence is that of Peptide deformylase from Chlorobaculum tepidum (strain ATCC 49652 / DSM 12025 / NBRC 103806 / TLS) (Chlorobium tepidum).